The primary structure comprises 438 residues: Protein ROOT INITIATION DEFECTIVE 3 (438 aa).

6 WD repeats span residues 36–74, 76–115, 118–157, 171–212, 214–253, and 261–300; these read AHGLTAVGEKFLASSQLSARNTSGSIFYWSWTKPQAEVK, YPVEPIKALAANNEGTYLVGGGISGDIYLWEVATGKLLKK, GHYRSVTCLVFSGDDSLLVSGSQDGSIRVWSLIRLFDDFQ, EHTM…LLKN, IFPSVINALALDPGGCVFYAGARDSKIYIGAINATSEYGT, and EKGKAITCLAYCADGNLLISGSEDGVVCVWDPKSLRHVRT. The stretch at 394–434 forms a coiled coil; sequence AATEMEMERLKLEYKRSLQMNEQWQKNYENLLQVVMEEEQI.

In terms of biological role, involved in meristem development. Acts as a negative regulator of the CUC-STM pathway in shoot apical meristem (SAM) neo-formation. The sequence is that of Protein ROOT INITIATION DEFECTIVE 3 (RID3) from Arabidopsis thaliana (Mouse-ear cress).